Here is a 258-residue protein sequence, read N- to C-terminus: Ubiquinone/menaquinone biosynthesis C-methyltransferase UbiE (258 aa).

Residues 1-21 are disordered; that stretch reads MPESRTSADGGMETSYGFREV. S-adenosyl-L-methionine is bound by residues Thr81, Asp102, and 130 to 131; that span reads NA.

This sequence belongs to the class I-like SAM-binding methyltransferase superfamily. MenG/UbiE family.

The enzyme catalyses a 2-demethylmenaquinol + S-adenosyl-L-methionine = a menaquinol + S-adenosyl-L-homocysteine + H(+). It carries out the reaction a 2-methoxy-6-(all-trans-polyprenyl)benzene-1,4-diol + S-adenosyl-L-methionine = a 5-methoxy-2-methyl-3-(all-trans-polyprenyl)benzene-1,4-diol + S-adenosyl-L-homocysteine + H(+). It participates in quinol/quinone metabolism; menaquinone biosynthesis; menaquinol from 1,4-dihydroxy-2-naphthoate: step 2/2. It functions in the pathway cofactor biosynthesis; ubiquinone biosynthesis. Functionally, methyltransferase required for the conversion of demethylmenaquinol (DMKH2) to menaquinol (MKH2) and the conversion of 2-polyprenyl-6-methoxy-1,4-benzoquinol (DDMQH2) to 2-polyprenyl-3-methyl-6-methoxy-1,4-benzoquinol (DMQH2). The protein is Ubiquinone/menaquinone biosynthesis C-methyltransferase UbiE of Rhizobium leguminosarum bv. trifolii (strain WSM2304).